We begin with the raw amino-acid sequence, 338 residues long: MLSALARPASAALRRSFSTSAQNNAKVAVLGASGGIGQPLSLLLKNSPLVSRLTLYDIAHTPGVAADLSHIETKAVVKGYLGPEQLPDCLKGCDVVVIPAGVPRKPGMTRDDLFNTNATIVATLAAACAQHRPEAMICIIANPVNSTIPITAEVFKKHGVYNPSKIFGVTTLDIVRANTFVAELKGLDPARVNVPVIGGHAGKTIIPLISQCTPKVDFPQDQLTALTGRIQEAGTEVVKAKAGAGSATLSMAYAGARFVFSLVDAMNGKEGVVECSFVKSQETECTYFSTPLLLGKKGIEKNLGIGQIPSFEEKMISDAIPELKASIKKGEDFVKTLK.

A mitochondrion-targeting transit peptide spans 1–24 (MLSALARPASAALRRSFSTSAQNN). Residues 31 to 37 (GASGGIG) and D57 contribute to the NAD(+) site. S33 is a glycosylation site (O-linked (GlcNAc) serine). N6-acetyllysine; alternate is present on residues K78 and K91. 2 positions are modified to N6-succinyllysine; alternate: K78 and K91. Positions 104 and 110 each coordinate substrate. NAD(+) is bound by residues N117 and 140 to 142 (IAN). N142 provides a ligand contact to substrate. K165 carries the post-translational modification N6-acetyllysine. Substrate is bound at residue R176. Position 185 is an N6-acetyllysine; alternate (K185). K185 is modified (N6-succinyllysine; alternate). The active-site Proton acceptor is the H200. The residue at position 203 (K203) is an N6-succinyllysine. N6-acetyllysine; alternate is present on residues K215 and K239. Residues K215 and K239 each carry the N6-succinyllysine; alternate modification. At K239 the chain carries N6-malonyllysine; alternate. Phosphoserine is present on S246. Residue M251 participates in NAD(+) binding. An N6-succinyllysine modification is found at K269. An N6-acetyllysine; alternate mark is found at K296, K301, K314, and K324. Residues K296, K301, K314, and K324 each carry the N6-succinyllysine; alternate modification. Phosphoserine is present on S326. N6-acetyllysine; alternate occurs at positions 328, 329, and 335. An N6-succinyllysine; alternate modification is found at K328. N6-malonyllysine; alternate is present on K329. N6-succinyllysine; alternate is present on K335.

Belongs to the LDH/MDH superfamily. MDH type 1 family. As to quaternary structure, homodimer. Post-translationally, acetylation is enhanced after treatment either with trichostin A (TCA) or with nicotinamide (NAM) with the appearance of tri- and tetraacetylations. Glucose also increases acetylation.

Its subcellular location is the mitochondrion matrix. The enzyme catalyses (S)-malate + NAD(+) = oxaloacetate + NADH + H(+). Enzyme activity is enhanced by acetylation. The protein is Malate dehydrogenase, mitochondrial (MDH2) of Macaca fascicularis (Crab-eating macaque).